A 117-amino-acid chain; its full sequence is Holo-[acyl-carrier-protein] synthase (117 aa).

2 residues coordinate Mg(2+): Asp6 and Glu55.

It belongs to the P-Pant transferase superfamily. AcpS family. Mg(2+) serves as cofactor.

It localises to the cytoplasm. The catalysed reaction is apo-[ACP] + CoA = holo-[ACP] + adenosine 3',5'-bisphosphate + H(+). Functionally, transfers the 4'-phosphopantetheine moiety from coenzyme A to a Ser of acyl-carrier-protein. This Chlorobaculum parvum (strain DSM 263 / NCIMB 8327) (Chlorobium vibrioforme subsp. thiosulfatophilum) protein is Holo-[acyl-carrier-protein] synthase.